The following is a 480-amino-acid chain: tRNA (uracil-5-)-methyltransferase homolog B (480 aa).

The S-adenosyl-L-methionine site is built by Gln-299, Glu-349, and Asn-399. The active-site Nucleophile is the Cys-427. Glu-473 acts as the Proton acceptor in catalysis.

The protein belongs to the class I-like SAM-binding methyltransferase superfamily. RNA M5U methyltransferase family.

It localises to the mitochondrion. It catalyses the reaction uridine(54) in tRNA + S-adenosyl-L-methionine = 5-methyluridine(54) in tRNA + S-adenosyl-L-homocysteine + H(+). It carries out the reaction a uridine in 12S rRNA + S-adenosyl-L-methionine = a 5-methyluridine in 12S rRNA + S-adenosyl-L-homocysteine + H(+). Functionally, mitochondrial S-adenosyl-L-methionine-dependent methyltransferase that catalyzes the formation of 5-methyl-uridine in tRNAs and 12S rRNA. Catalyzes the methylation of uridine at position 54 (m5U54) in all tRNAs. Specifically methylates the uridine in position 429 of 12S rRNA (m5U429). Does not affect RNA stability or mitochondrial translation. The polypeptide is tRNA (uracil-5-)-methyltransferase homolog B (trmt2b) (Danio rerio (Zebrafish)).